The following is a 1879-amino-acid chain: Genome polyprotein (1879 aa).

A disordered region spans residues 37 to 98 (GPLDHDSRHG…TSTDVVRSGP (62 aa)). Positions 38–50 (PLDHDSRHGRDPV) are enriched in basic and acidic residues. Over residues 79–93 (SGTNPSHLKPTSTDV) the composition is skewed to polar residues. The SF3 helicase domain maps to 564-720 (DNVISCCTRR…ENWKRENPGK (157 aa)). 590 to 597 (GPPGCGKT) serves as a coordination point for ATP. Position 1093 is an O-(5'-phospho-RNA)-tyrosine (tyrosine 1093). One can recognise a Peptidase C24 domain in the interval 1188–1341 (GVTHKNAIVS…KLIVPYVKVD (154 aa)). Catalysis depends on for 3CLpro activity residues histidine 1222, glutamate 1243, and cysteine 1305. The region spanning 1591–1716 (HDRYCVDYSK…IVPPLISSVM (126 aa)) is the RdRp catalytic domain.

In terms of assembly, homodimer. Interacts with NTPase, protein p30 and protease-polymerase p76. As to quaternary structure, interacts with capsid protein VP1 and protease-polymerase p76. Interacts with host IEF4e; this interaction plays a role in translation of viral proteins. Homooligomer. Interacts with Vpg, protein p32 and may interact with capsid protein VP1. Post-translationally, specific enzymatic cleavages in vivo yield mature proteins. Pro-Pol is first autocatalytically cleaved, then processes the whole polyprotein. In terms of processing, VPg is uridylylated by the polymerase and is covalently attached to the 5'-end of the polyadenylated genomic and subgenomic RNAs. This uridylylated form acts as a nucleotide-peptide primer for the polymerase.

It is found in the host endoplasmic reticulum membrane. The catalysed reaction is a ribonucleoside 5'-triphosphate + H2O = a ribonucleoside 5'-diphosphate + phosphate + H(+). The enzyme catalyses RNA(n) + a ribonucleoside 5'-triphosphate = RNA(n+1) + diphosphate. It catalyses the reaction Endopeptidase with a preference for cleavage when the P1 position is occupied by Glu-|-Xaa and the P1' position is occupied by Gly-|-Yaa.. Together with NTPase and NS4, initiates the formation of the replication complex. Induces the proliferation of the host smooth ER membranes forming long tubular structures. These remodeled membranes probably form the viral factories that contain the replication complex. In terms of biological role, displays NTPase activity, but no helicase activity. Induces the formation of convoluted membranes derived from the host ER. These remodeled membranes probably form the viral factories that contain the replication complex. Together with NS2 and NS4, initiates the formation of the replication complex. Functionally, probable key protein responsible for the formation of membrane alterations by the virus. Induces the formation of convoluted membranes derived from the host ER. These remodeled membranes probably form the viral factories that contain the replication complex. Together with NS2 and NTPase, initiates the formation of the replication complex. Its function is as follows. Viral genome-linked protein is covalently linked to the 5'-end of the positive-strand, negative-strand genomic RNAs and subgenomic RNA. Acts as a genome-linked replication primer. May recruit ribosome to viral RNA thereby promoting viral proteins translation. Interacts with host translation initiation complex to allow the translation of viral proteins. Protease-polymerase p76 processes the polyprotein: Pro-Pol is first released by autocleavage, then all other proteins are cleaved. Cleaves host translation initiation factor eIF4G1, eIF4G2 and PABP1 thereby inducing a shutdown of host protein synthesis. This shutdown may not prevent viral mRNA from being translated since viral Vpg replaces the cap. Also functions as an RNA-directed RNA polymerase, which replicates genomic and antigenomic viral RNA by recognizing specific signals. Also transcribes a subgenomic mRNA by initiating RNA synthesis internally on antigenomic RNA. This sgRNA codes for structural proteins. Catalyzes the covalent attachment VPg with viral RNAs. The protein is Genome polyprotein of Otariidae (fur seals &amp; sea lions).